An 867-amino-acid polypeptide reads, in one-letter code: 2-methylcitrate dehydratase (2-methyl-trans-aconitate forming) (867 aa).

The [4Fe-4S] cluster site is built by cysteine 410, cysteine 476, and cysteine 479.

This sequence belongs to the aconitase/IPM isomerase family. The cofactor is [4Fe-4S] cluster.

The catalysed reaction is (2S,3S)-2-methylcitrate = 2-methyl-trans-aconitate + H2O. The enzyme catalyses citrate = D-threo-isocitrate. Its pathway is organic acid metabolism; propanoate degradation. With respect to regulation, inhibited by ferricyanide and EDTA. Functionally, involved in the catabolism of short chain fatty acids (SCFA) via the 2-methylcitrate cycle II (propionate degradation route). In vivo under anaerobic conditions, AcnD catalyzes the stereospecific dehydration of (2S,3S)-methylcitrate (2-MC) to yield the trans isomer of 2-methyl-aconitate (2-MCA). AcnD can also accept citrate and cis-aconitate, but with a lower efficiency. 2-methylisocitrate and isocitrate are not substrates. This Shewanella oneidensis (strain ATCC 700550 / JCM 31522 / CIP 106686 / LMG 19005 / NCIMB 14063 / MR-1) protein is 2-methylcitrate dehydratase (2-methyl-trans-aconitate forming) (acnD).